Consider the following 1163-residue polypeptide: Receptor-type guanylate cyclase gcy-21 (1163 aa).

Positions 1–17 (MLSAVLLLLFFIQNVQN) are cleaved as a signal peptide. Topologically, residues 18–490 (FDKIELEDIT…ENCGPPANNT (473 aa)) are extracellular. Asn-102, Asn-296, Asn-322, Asn-346, Asn-466, and Asn-488 each carry an N-linked (GlcNAc...) asparagine glycan. Residues 491–511 (FIIVISVGVAVLIGLAIAAAF) form a helical membrane-spanning segment. The Cytoplasmic segment spans residues 512–1163 (LYKRYRYERR…QIQEKTYEFS (652 aa)). The Protein kinase domain occupies 587–882 (FNTGSTARAG…QIKRKLKPLT (296 aa)). ATP contacts are provided by residues 593–601 (ARAGPFGPI) and Lys-635. A coiled-coil region spans residues 901–930 (TDKLEKDIAERNEELEGEKAKSEALLKMML). One can recognise a Guanylate cyclase domain in the interval 953–1083 (TVFFSDCPGF…DTVNTASRME (131 aa)).

This sequence belongs to the adenylyl cyclase class-4/guanylyl cyclase family. As to expression, expressed in ASG sensory neurons.

It is found in the cell membrane. The catalysed reaction is GTP = 3',5'-cyclic GMP + diphosphate. Guanylate cyclase involved in the production of the second messenger cGMP. Plays a role in dauer formation. This is Receptor-type guanylate cyclase gcy-21 from Caenorhabditis elegans.